The chain runs to 238 residues: Small ribosomal subunit protein eS4 (238 aa).

The region spanning 38–109 (IPLALVIRDV…DERSYYALVP (72 aa)) is the S4 RNA-binding domain.

It belongs to the eukaryotic ribosomal protein eS4 family.

The sequence is that of Small ribosomal subunit protein eS4 from Pyrobaculum neutrophilum (strain DSM 2338 / JCM 9278 / NBRC 100436 / V24Sta) (Thermoproteus neutrophilus).